Reading from the N-terminus, the 313-residue chain is Methionyl-tRNA formyltransferase (313 aa).

111–114 (SLLP) provides a ligand contact to (6S)-5,6,7,8-tetrahydrofolate.

Belongs to the Fmt family.

The catalysed reaction is L-methionyl-tRNA(fMet) + (6R)-10-formyltetrahydrofolate = N-formyl-L-methionyl-tRNA(fMet) + (6S)-5,6,7,8-tetrahydrofolate + H(+). In terms of biological role, attaches a formyl group to the free amino group of methionyl-tRNA(fMet). The formyl group appears to play a dual role in the initiator identity of N-formylmethionyl-tRNA by promoting its recognition by IF2 and preventing the misappropriation of this tRNA by the elongation apparatus. This chain is Methionyl-tRNA formyltransferase, found in Mesoplasma florum (strain ATCC 33453 / NBRC 100688 / NCTC 11704 / L1) (Acholeplasma florum).